Consider the following 511-residue polypeptide: GMP synthase [glutamine-hydrolyzing] (511 aa).

Residues 5–195 form the Glutamine amidotransferase type-1 domain; it reads AILVLDFGSQ…VFKICQAQIN (191 aa). Cysteine 82 (nucleophile) is an active-site residue. Residues histidine 169 and glutamate 171 contribute to the active site. A GMPS ATP-PPase domain is found at 196-386; sequence WSLEGNLETI…LGIKKESLYR (191 aa). Residue 223–229 participates in ATP binding; it reads SGGTDSL.

As to quaternary structure, homodimer.

The catalysed reaction is XMP + L-glutamine + ATP + H2O = GMP + L-glutamate + AMP + diphosphate + 2 H(+). It functions in the pathway purine metabolism; GMP biosynthesis; GMP from XMP (L-Gln route): step 1/1. Its function is as follows. Catalyzes the synthesis of GMP from XMP. This is GMP synthase [glutamine-hydrolyzing] (guaA) from Borreliella burgdorferi (strain N40) (Borrelia burgdorferi).